Here is a 543-residue protein sequence, read N- to C-terminus: MSAKEIKFATDARDRMLRGVEILTNAVKVTLGPKGRNVIIDKAYGAPRITKDGVTVAKEIELADKFENMGAQMVREVASKTNDLAGDGTTTATVLAASILREGAKLVAAGMNPMDLKRGIDQAVAAVVVEIKAKAKKVKSSAEIAQVGTIAANGDATVGAMIAKAMDKVGNDGVITVEEAKTAETELDVVEGMQFDRGYLSPYFVTNADKMRVELEEPYVLIHEKKLGNLQAMLPILEAVVQSGRPLLIISEDVEGEALATLVVNKLRGGLKVAAVKAPGFGDRRKAMLEDIAVLTAGQMISEDLGIKLENVTIEMLGRAKRVLIEKDTTTIIDGAGTKATIQARVAQIKGQIEETTSDYDKEKLQERLAKLSGGVAVIRVGGVTESEVKEKKDRIDDALNATRAAVEEGIVPGGGVALLRARSALSGLNGANADVTAGISIVLRALEAPIRQIAENSGVEGSIVVGKLADSKDHNLGFDAQNETYVDMIKAGIVDPAKVVRTALQDAGSIAALLITAEAMITDIPAKDAAPAGGGGGGMGGY.

ATP contacts are provided by residues 30-33, lysine 51, 87-91, glycine 415, and aspartate 496; these read TLGP and DGTTT.

This sequence belongs to the chaperonin (HSP60) family. Forms a cylinder of 14 subunits composed of two heptameric rings stacked back-to-back. Interacts with the co-chaperonin GroES.

The protein resides in the cytoplasm. It catalyses the reaction ATP + H2O + a folded polypeptide = ADP + phosphate + an unfolded polypeptide.. Functionally, together with its co-chaperonin GroES, plays an essential role in assisting protein folding. The GroEL-GroES system forms a nano-cage that allows encapsulation of the non-native substrate proteins and provides a physical environment optimized to promote and accelerate protein folding. This chain is Chaperonin GroEL 1, found in Mesorhizobium japonicum (strain LMG 29417 / CECT 9101 / MAFF 303099) (Mesorhizobium loti (strain MAFF 303099)).